The chain runs to 139 residues: NADH-quinone oxidoreductase subunit A (139 aa).

3 consecutive transmembrane segments (helical) span residues 16–36, 69–89, and 94–114; these read GLFI…ASLL, LVAM…AWAV, and VGWE…AGLV.

The protein belongs to the complex I subunit 3 family. NDH-1 is composed of 14 different subunits. Subunits NuoA, H, J, K, L, M, N constitute the membrane sector of the complex.

It is found in the cell inner membrane. The catalysed reaction is a quinone + NADH + 5 H(+)(in) = a quinol + NAD(+) + 4 H(+)(out). NDH-1 shuttles electrons from NADH, via FMN and iron-sulfur (Fe-S) centers, to quinones in the respiratory chain. The immediate electron acceptor for the enzyme in this species is believed to be ubiquinone. Couples the redox reaction to proton translocation (for every two electrons transferred, four hydrogen ions are translocated across the cytoplasmic membrane), and thus conserves the redox energy in a proton gradient. The protein is NADH-quinone oxidoreductase subunit A of Chromohalobacter salexigens (strain ATCC BAA-138 / DSM 3043 / CIP 106854 / NCIMB 13768 / 1H11).